The chain runs to 82 residues: uncharacterized protein (82 aa).

2 helical membrane-spanning segments follow: residues 22 to 39 (WASD…MFIA) and 46 to 65 (LKMG…TWVI).

The protein localises to the cell membrane. This is an uncharacterized protein from Bacillus subtilis (strain 168).